The chain runs to 222 residues: Peptide methionine sulfoxide reductase MsrA (222 aa).

Residue C60 is part of the active site.

It belongs to the MsrA Met sulfoxide reductase family.

The catalysed reaction is L-methionyl-[protein] + [thioredoxin]-disulfide + H2O = L-methionyl-(S)-S-oxide-[protein] + [thioredoxin]-dithiol. It carries out the reaction [thioredoxin]-disulfide + L-methionine + H2O = L-methionine (S)-S-oxide + [thioredoxin]-dithiol. Its function is as follows. Has an important function as a repair enzyme for proteins that have been inactivated by oxidation. Catalyzes the reversible oxidation-reduction of methionine sulfoxide in proteins to methionine. The polypeptide is Peptide methionine sulfoxide reductase MsrA (Pseudomonas entomophila (strain L48)).